We begin with the raw amino-acid sequence, 1241 residues long: MSGIESTEEPCDSMTESQSLSPLEPEERQTRKDSGLQSQSLTKRHFAFSPHRLITSISRHTSPHKPRPKSESRVPVPKLHSLPPQRLASPERDKPSIEGISKSFVSFLTAASVYAGFQDLEGEDQQVSPDDVSAGESEDQQADESSDEQEDDDQDDRTFYATDPSPTELTINENTPLPEPEPPRRTLRKARSRFEFSVVKRLSENENDQLAQKRAIALSNKLKRTFDISDTDVFISDYPCWLMGDVLLQGHLYITKHHILFFAFLPKKQGSISKSGALTTKSYPSLREHRKWAVLRNNTFSVYSNSTDLYFPLLVIDLRTALRAEILQSSSTKQNPSKPVWIRIITESRTHWFLADNLASARSWVSSLKKHIFASRNKGDQVAIKIPLQNVVDLELTSVIGVTKNLRIKVIESADTFAIDDYFLMFFSRGEKAVEDIKKVIHDAGMEISEGTSTESEDEQGVDNNLLKSKIELLKKSPSMVQTSSKSNVPVIRMDEPADDFSQEQESAESSKPVSDDEIVSADDNQELEEKQPQDNLANAEKENHDKVSRANSRRTWSTRSLVQGLTAITQGWMSPSPMAHFDEKYAVLRGEEDSYFVKDAEQRKAATERFRKHFSLTDGEKLIATYHAYLVKGIPAYGKIYLGSNEMCFRSTLPGTGTIMILPFSDIENVNKEKGFRFGYSGLVVVIHGHEELFFEFASDQARDDCEFMLLKQMDMFKKGSTDSSPPNASEGSSDESCNLAESNTSLASARLRMFENRIHDAIGLDVPIIIEEHPLTKTKVRPLKSYRFTLLTIGSRGDVQPYIALGKALMKEGHQVRIVTHAEFEPWIKKHGIRFASIAGDPSELMALMVTHPTINYNFIKEAKSKFRSWIDDLLVTSWKACQDTDILIESPSSICGIHIAEKLQIPYFRAFTMPWTRTRAYPHAFMVPDQKLGGAYNYMTHVAFENGYWRGTAHQVNKWRVETLGLPKTSLAEMKQNNVPFLYNVSPTVFPPSVDFAEWVKVTGYWFLDESETYQPPEVLTKFIEQARKDGKKVVYIGFGSIVVSKPSELTQAVVDAVLEADVRCILNKGWSDRLGTKTEIEVVLPPEIYNAGSVPHDWLFPQIDAAVHHGGSGTTGASLRFGVPTIIKPFFGDQKFYAGRVEDLGCGVSLKDLNYKSLARALKEVTTNTRIIEKAKLVGARIRSETGVQTAIETIYNEMEYARSLSISKVKQVSVVKSDEEFDDDKDEEVEGSWLLV.

Over residues 1–11 the composition is skewed to acidic residues; that stretch reads MSGIESTEEPC. Disordered stretches follow at residues 1-97 and 124-189; these read MSGI…KPSI and DQQV…TLRK. Residues 25 to 34 show a composition bias toward basic and acidic residues; it reads PEERQTRKDS. Over residues 136 to 155 the composition is skewed to acidic residues; that stretch reads ESEDQQADESSDEQEDDDQD. Residues 220–267 form the GRAM 1 domain; the sequence is NKLKRTFDISDTDVFISDYPCWLMGDVLLQGHLYITKHHILFFAFLPK. The PH domain maps to 271 to 373; that stretch reads SISKSGALTT…WVSSLKKHIF (103 aa). The segment at 499 to 556 is disordered; the sequence is DDFSQEQESAESSKPVSDDEIVSADDNQELEEKQPQDNLANAEKENHDKVSRANSRRT. Residues 516–527 are compositionally biased toward acidic residues; sequence DDEIVSADDNQE. Over residues 540–549 the composition is skewed to basic and acidic residues; sequence AEKENHDKVS. The GRAM 2 domain maps to 609 to 675; sequence ERFRKHFSLT…SDIENVNKEK (67 aa). Positions 720 to 741 are disordered; it reads KGSTDSSPPNASEGSSDESCNL. Residues 723–741 show a composition bias toward polar residues; it reads TDSSPPNASEGSSDESCNL. The UDP-alpha-D-glucose site is built by Ser797, Arg798, Asp800, Asn1071, Val1098, His1100, His1113, Ser1116, Gly1117, Thr1118, Asp1137, and Gln1138.

Belongs to the glycosyltransferase 28 family.

Its subcellular location is the cytoplasm. The protein resides in the preautophagosomal structure membrane. It carries out the reaction a sterol + UDP-alpha-D-glucose = a sterol 3-beta-D-glucoside + UDP + H(+). It catalyses the reaction ergosterol + UDP-alpha-D-glucose = ergosteryl 3-beta-D-glucoside + UDP + H(+). Functionally, sterol glycosyltransferase responsible for the glycosylation of ergosterol to form ergosterol-glucoside. Mediates autophagic degradation of peroxisomes (pexophagy). The sequence is that of Sterol 3-beta-glucosyltransferase from Pichia angusta (Yeast).